The following is a 1201-amino-acid chain: DNA-directed RNA polymerase subunit beta' (1201 aa).

Zn(2+) contacts are provided by Cys-60, Cys-62, Cys-75, and Cys-78. The Mg(2+) site is built by Asp-449, Asp-451, and Asp-453. Zn(2+) contacts are provided by Cys-818, Cys-892, Cys-899, and Cys-902.

Belongs to the RNA polymerase beta' chain family. As to quaternary structure, the RNAP catalytic core consists of 2 alpha, 1 beta, 1 beta' and 1 omega subunit. When a sigma factor is associated with the core the holoenzyme is formed, which can initiate transcription. Requires Mg(2+) as cofactor. It depends on Zn(2+) as a cofactor.

It carries out the reaction RNA(n) + a ribonucleoside 5'-triphosphate = RNA(n+1) + diphosphate. Functionally, DNA-dependent RNA polymerase catalyzes the transcription of DNA into RNA using the four ribonucleoside triphosphates as substrates. In Listeria welshimeri serovar 6b (strain ATCC 35897 / DSM 20650 / CCUG 15529 / CIP 8149 / NCTC 11857 / SLCC 5334 / V8), this protein is DNA-directed RNA polymerase subunit beta'.